The primary structure comprises 906 residues: Protein translocase subunit SecA (906 aa).

Residues glutamine 87, 105 to 109, and aspartate 521 contribute to the ATP site; that span reads GEGKT. Over residues 849 to 865 the composition is skewed to low complexity; the sequence is STATAAEPAPEASQSQS. The tract at residues 849–897 is disordered; it reads STATAAEPAPEASQSQSTNDATASQNPPITEVEASKVGRNQPCPCGSGK. Over residues 866–876 the composition is skewed to polar residues; that stretch reads TNDATASQNPP. 4 residues coordinate Zn(2+): cysteine 891, cysteine 893, cysteine 902, and cysteine 903.

This sequence belongs to the SecA family. In terms of assembly, monomer and homodimer. Part of the essential Sec protein translocation apparatus which comprises SecA, SecYEG and auxiliary proteins SecDF-YajC and YidC. It depends on Zn(2+) as a cofactor.

It localises to the cell inner membrane. The protein localises to the cytoplasm. The enzyme catalyses ATP + H2O + cellular proteinSide 1 = ADP + phosphate + cellular proteinSide 2.. Its function is as follows. Part of the Sec protein translocase complex. Interacts with the SecYEG preprotein conducting channel. Has a central role in coupling the hydrolysis of ATP to the transfer of proteins into and across the cell membrane, serving both as a receptor for the preprotein-SecB complex and as an ATP-driven molecular motor driving the stepwise translocation of polypeptide chains across the membrane. This Dichelobacter nodosus (strain VCS1703A) protein is Protein translocase subunit SecA.